The primary structure comprises 140 residues: MAIERTFSMIKPDATKRNLTGAITKMLEDAGLKVVASKRVWMSRRQAEGFYAVHKDRPFFDELCEFMSSGPTVIQVLEGENAIAKNREVMGATNPANAAEGTIRKVFALSIGENSVHGSDAPETAEQEIRYWFSETEIVG.

ATP is bound by residues Lys-11, Phe-59, Arg-87, Thr-93, Arg-104, and Asn-114. The Pros-phosphohistidine intermediate role is filled by His-117.

This sequence belongs to the NDK family. As to quaternary structure, homotetramer. Mg(2+) is required as a cofactor.

The protein localises to the cytoplasm. It carries out the reaction a 2'-deoxyribonucleoside 5'-diphosphate + ATP = a 2'-deoxyribonucleoside 5'-triphosphate + ADP. The enzyme catalyses a ribonucleoside 5'-diphosphate + ATP = a ribonucleoside 5'-triphosphate + ADP. In terms of biological role, major role in the synthesis of nucleoside triphosphates other than ATP. The ATP gamma phosphate is transferred to the NDP beta phosphate via a ping-pong mechanism, using a phosphorylated active-site intermediate. The chain is Nucleoside diphosphate kinase from Chelativorans sp. (strain BNC1).